The primary structure comprises 375 residues: tRNA-specific 2-thiouridylase MnmA (375 aa).

ATP-binding positions include 12–19 (GMSGGVDS) and M38. Residues 98 to 100 (NPD) form an interaction with target base in tRNA region. C103 functions as the Nucleophile in the catalytic mechanism. C103 and C200 are oxidised to a cystine. An ATP-binding site is contributed by G127. The tract at residues 150 to 152 (KDQ) is interaction with tRNA. C200 functions as the Cysteine persulfide intermediate in the catalytic mechanism. Residues 312–313 (RY) are interaction with tRNA.

Belongs to the MnmA/TRMU family.

It localises to the cytoplasm. The catalysed reaction is S-sulfanyl-L-cysteinyl-[protein] + uridine(34) in tRNA + AH2 + ATP = 2-thiouridine(34) in tRNA + L-cysteinyl-[protein] + A + AMP + diphosphate + H(+). Catalyzes the 2-thiolation of uridine at the wobble position (U34) of tRNA, leading to the formation of s(2)U34. This Levilactobacillus brevis (strain ATCC 367 / BCRC 12310 / CIP 105137 / JCM 1170 / LMG 11437 / NCIMB 947 / NCTC 947) (Lactobacillus brevis) protein is tRNA-specific 2-thiouridylase MnmA.